Reading from the N-terminus, the 316-residue chain is Phospho-N-acetylmuramoyl-pentapeptide-transferase (316 aa).

10 helical membrane-spanning segments follow: residues 5 to 25 (IILA…LFIP), 49 to 69 (GTPT…TLIF), 76 to 96 (LAIL…DDFL), 116 to 136 (FLLA…EVIF), 141 to 161 (TTID…VGTV), 172 to 192 (GLAA…ALFL), 195 to 212 (ITYG…LGFL), 221 to 241 (IFMG…AAVL), 244 to 264 (LPLI…SVII), and 296 to 316 (VVYA…YSLS).

It belongs to the glycosyltransferase 4 family. MraY subfamily. Requires Mg(2+) as cofactor.

Its subcellular location is the cell membrane. The catalysed reaction is UDP-N-acetyl-alpha-D-muramoyl-L-alanyl-gamma-D-glutamyl-meso-2,6-diaminopimeloyl-D-alanyl-D-alanine + di-trans,octa-cis-undecaprenyl phosphate = di-trans,octa-cis-undecaprenyl diphospho-N-acetyl-alpha-D-muramoyl-L-alanyl-D-glutamyl-meso-2,6-diaminopimeloyl-D-alanyl-D-alanine + UMP. Its pathway is cell wall biogenesis; peptidoglycan biosynthesis. In terms of biological role, catalyzes the initial step of the lipid cycle reactions in the biosynthesis of the cell wall peptidoglycan: transfers peptidoglycan precursor phospho-MurNAc-pentapeptide from UDP-MurNAc-pentapeptide onto the lipid carrier undecaprenyl phosphate, yielding undecaprenyl-pyrophosphoryl-MurNAc-pentapeptide, known as lipid I. The polypeptide is Phospho-N-acetylmuramoyl-pentapeptide-transferase (Thermoanaerobacter pseudethanolicus (strain ATCC 33223 / 39E) (Clostridium thermohydrosulfuricum)).